Reading from the N-terminus, the 194-residue chain is Small COPII coat GTPase SAR1B (194 aa).

The STAR; SAR1-N-terminal activation recruitment. Required for the activation and subsequent recruitment to ER membrane signature appears at 2–4; it reads FLV. Positions 10–14 are mediates recruitment to ER membranes; sequence MFLWL. GDP is bound by residues asparagine 30, alanine 31, glycine 32, lysine 33, threonine 34, and threonine 35. Asparagine 30 is a binding site for GTP. Residues glycine 32, lysine 33, threonine 34, and threonine 35 each contribute to the GTP site. Aspartate 70 is a binding site for Mg(2+). Residues lysine 131, aspartate 133, and isoleucine 172 each contribute to the GDP site. The GTP site is built by lysine 131, aspartate 133, and isoleucine 172.

The protein belongs to the small GTPase superfamily. SAR1 family. In terms of assembly, homodimer; upon association with membrane. Part of the coat protein complex II/COPII, composed of SEC23/24 and SEC13/31 heterodimers, that it helps recruit and assemble on endoplasmic reticulum (ER) membranes at ER exit sites.

It localises to the endoplasmic reticulum membrane. The protein resides in the golgi apparatus. It is found in the golgi stack membrane. Its subcellular location is the cytoplasm. The protein localises to the cytosol. The catalysed reaction is GTP + H2O = GDP + phosphate + H(+). With respect to regulation, small GTPases activation is mediated by guanine exchange factors (GEF), while inactivation through hydrolysis of the bound GTP is stimulated by GTPase activating proteins (GAP). In terms of biological role, small GTPase that cycles between an active GTP-bound and an inactive GDP-bound state and mainly functions in vesicle-mediated endoplasmic reticulum (ER) to Golgi transport. The active GTP-bound form inserts into the endoplasmic reticulum membrane where it recruits the remainder of the coat protein complex II/COPII. The coat protein complex II assembling and polymerizing on endoplasmic reticulum membrane is responsible for both the sorting of cargos and the deformation and budding of membranes into vesicles destined to the Golgi. The sequence is that of Small COPII coat GTPase SAR1B (sarB) from Dictyostelium discoideum (Social amoeba).